The primary structure comprises 473 residues: Ribulose bisphosphate carboxylase large chain 1 (473 aa).

2 residues coordinate substrate: N116 and T166. Residue K168 is the Proton acceptor of the active site. Residue K170 participates in substrate binding. K194, D196, and E197 together coordinate Mg(2+). Position 194 is an N6-carboxylysine (K194). Catalysis depends on H287, which acts as the Proton acceptor. Substrate-binding residues include R288, H320, and S372.

This sequence belongs to the RuBisCO large chain family. Type I subfamily. In terms of assembly, heterohexadecamer of 8 large chains and 8 small chains. Mg(2+) serves as cofactor.

It catalyses the reaction 2 (2R)-3-phosphoglycerate + 2 H(+) = D-ribulose 1,5-bisphosphate + CO2 + H2O. The enzyme catalyses D-ribulose 1,5-bisphosphate + O2 = 2-phosphoglycolate + (2R)-3-phosphoglycerate + 2 H(+). Functionally, ruBisCO catalyzes two reactions: the carboxylation of D-ribulose 1,5-bisphosphate, the primary event in carbon dioxide fixation, as well as the oxidative fragmentation of the pentose substrate. Both reactions occur simultaneously and in competition at the same active site. The protein is Ribulose bisphosphate carboxylase large chain 1 of Acidithiobacillus ferrooxidans (strain ATCC 23270 / DSM 14882 / CIP 104768 / NCIMB 8455) (Ferrobacillus ferrooxidans (strain ATCC 23270)).